The sequence spans 265 residues: Phosphatidylglycerol--prolipoprotein diacylglyceryl transferase (265 aa).

Transmembrane regions (helical) follow at residues 17 to 37, 59 to 79, 94 to 114, 123 to 143, 177 to 197, 204 to 224, and 238 to 258; these read LAIRWYGLMYLAAFAQFIWLA, MLFYGVLGVIIGGRLGEVLFY, VWKGGMSFHGGFLGVLLAMSI, VLDVWDFIAPMVPLGYAFGRL, SPLYQALVDGLLMFILLWLFA, MAVGGMFALLYGSARFFTEYF, and ISAGQMLSVPLIVLGIVMLLI. Residue Arg142 participates in a 1,2-diacyl-sn-glycero-3-phospho-(1'-sn-glycerol) binding.

It belongs to the Lgt family.

The protein resides in the cell inner membrane. The enzyme catalyses L-cysteinyl-[prolipoprotein] + a 1,2-diacyl-sn-glycero-3-phospho-(1'-sn-glycerol) = an S-1,2-diacyl-sn-glyceryl-L-cysteinyl-[prolipoprotein] + sn-glycerol 1-phosphate + H(+). Its pathway is protein modification; lipoprotein biosynthesis (diacylglyceryl transfer). Catalyzes the transfer of the diacylglyceryl group from phosphatidylglycerol to the sulfhydryl group of the N-terminal cysteine of a prolipoprotein, the first step in the formation of mature lipoproteins. This Janthinobacterium sp. (strain Marseille) (Minibacterium massiliensis) protein is Phosphatidylglycerol--prolipoprotein diacylglyceryl transferase.